An 860-amino-acid chain; its full sequence is Leucine--tRNA ligase (860 aa).

Positions proline 42–histidine 52 match the 'HIGH' region motif. Positions lysine 619–serine 623 match the 'KMSKS' region motif. Position 622 (lysine 622) interacts with ATP.

Belongs to the class-I aminoacyl-tRNA synthetase family.

The protein resides in the cytoplasm. It carries out the reaction tRNA(Leu) + L-leucine + ATP = L-leucyl-tRNA(Leu) + AMP + diphosphate. The chain is Leucine--tRNA ligase from Salmonella paratyphi A (strain ATCC 9150 / SARB42).